Consider the following 51-residue polypeptide: Defensin-like protein 2A (51 aa).

Residue Gln-1 is modified to Pyrrolidone carboxylic acid. Cystine bridges form between Cys-4–Cys-51, Cys-15–Cys-36, Cys-21–Cys-45, and Cys-25–Cys-47. Ser-8 carries the post-translational modification Phosphoserine; by CPK.

As to quaternary structure, forms oligomers in its native state.

Its function is as follows. Possesses antifungal activity sensitive to inorganic cations. The chain is Defensin-like protein 2A from Sinapis alba (White mustard).